The following is a 779-amino-acid chain: MENFFIVKKLASATYGKALNVDLNKLLQALNHHSLQGLISYCSALTILHYDYSTLAARLSVYLLHQSTASSFSKAVSLQAAQSCSRLSSHFVDVVYKYKAIFDSYIDYSRDYKLSLLGIETMKNSYLLKNKDGVIMERPQDAYMRVAIMIHGMGRVVNMKMILLTYDLLSRHVITHASPTMFNAGTKKPQLSSCFLLNVNDNLENLYDMVKTAGIISGGGGGIGLCLSGIRAKNSFISGSGLRSNGIQNYIVLQNASQCYANQGGLRPGAYAVYLELWHQDIFTFLQMPRLKGQMAEQRLNAPNLKYGLWVPDLFMEILEDQIHNRGDGTWYLFSPDQAPNLHKVFDLERSQHENAHREFKKLYYQYVAEKRYTGVTTAKEIIKEWFKTVVQVGNPYIGFKDAINRKSNLSHVGTITNSNLCIEITIPCWEGNEAEQGVCNLAAVNLAAFIRESSYDYRGLIEAAGNVTENLDNIIDNGYYPTEATRRSNMRHRPIGIGVFGLADVFASLKMKFGSPEAIAIDEAIHAALYYGAMRRSIELAKEKGSHPSFPGSAASKGLLQPDLWVRCGDLIPSWENRVAQTTQGVLTPKKWWQLRLAAIQGVRNGYLTALMPTATSSNSTGKNECFEPFTSNLYTRRTLSGEFIILNKYLMDDLEEINLWSEDIQQQLLNAGGSIQHILDIPAEIRERYKTSREMNQKILTKHAAARNPFVSQSMSLNYYFYEPELSQVLTVLVLGWKKGLTTGSYYCHFSPGAGTQKKIIRNSEKACNADCEACLL.

Residues serine 178, serine 193–cysteine 194, glycine 222, asparagine 420–glutamate 424, and proline 614–serine 618 contribute to the substrate site. Cysteine 194 and cysteine 440 are joined by a disulfide. Asparagine 420 acts as the Proton acceptor in catalysis. Cysteine 422 functions as the Cysteine radical intermediate in the catalytic mechanism. Residue glutamate 424 is the Proton acceptor of the active site.

This sequence belongs to the ribonucleoside diphosphate reductase large chain family. In terms of assembly, heterotetramer composed of a homodimer of the large subunit (R1) and a homodimer of the small subunit (R2). Larger multisubunit protein complex are also active, composed of (R1)n(R2)n.

It carries out the reaction a 2'-deoxyribonucleoside 5'-diphosphate + [thioredoxin]-disulfide + H2O = a ribonucleoside 5'-diphosphate + [thioredoxin]-dithiol. Its activity is regulated as follows. Under complex allosteric control mediated by deoxynucleoside triphosphates and ATP binding. The type of nucleotide bound at the specificity site determines substrate preference. It seems probable that ATP makes the enzyme reduce CDP and UDP, dGTP favors ADP reduction and dTTP favors GDP reduction. Its function is as follows. Ribonucleoside-diphosphate reductase holoenzyme provides the precursors necessary for viral DNA synthesis. Allows virus growth in non-dividing cells. Catalyzes the biosynthesis of deoxyribonucleotides from the corresponding ribonucleotides. This is Ribonucleoside-diphosphate reductase large subunit from African swine fever virus (isolate Tick/Malawi/Lil 20-1/1983) (ASFV).